The chain runs to 413 residues: Multifunctional CCA protein (413 aa).

G8 and R11 together coordinate ATP. CTP is bound by residues G8 and R11. Residues E21 and D23 each coordinate Mg(2+). ATP-binding residues include R91, R137, and R140. CTP contacts are provided by R91, R137, and R140. The HD domain occupies C228–L329.

It belongs to the tRNA nucleotidyltransferase/poly(A) polymerase family. Bacterial CCA-adding enzyme type 1 subfamily. In terms of assembly, monomer. Can also form homodimers and oligomers. The cofactor is Mg(2+). Requires Ni(2+) as cofactor.

The catalysed reaction is a tRNA precursor + 2 CTP + ATP = a tRNA with a 3' CCA end + 3 diphosphate. It catalyses the reaction a tRNA with a 3' CCA end + 2 CTP + ATP = a tRNA with a 3' CCACCA end + 3 diphosphate. In terms of biological role, catalyzes the addition and repair of the essential 3'-terminal CCA sequence in tRNAs without using a nucleic acid template. Adds these three nucleotides in the order of C, C, and A to the tRNA nucleotide-73, using CTP and ATP as substrates and producing inorganic pyrophosphate. tRNA 3'-terminal CCA addition is required both for tRNA processing and repair. Also involved in tRNA surveillance by mediating tandem CCA addition to generate a CCACCA at the 3' terminus of unstable tRNAs. While stable tRNAs receive only 3'-terminal CCA, unstable tRNAs are marked with CCACCA and rapidly degraded. The sequence is that of Multifunctional CCA protein from Acinetobacter baylyi (strain ATCC 33305 / BD413 / ADP1).